A 214-amino-acid polypeptide reads, in one-letter code: Large ribosomal subunit protein uL16 (214 aa).

Arginine 32 is modified (citrulline). Lysine 175 is covalently cross-linked (Glycyl lysine isopeptide (Lys-Gly) (interchain with G-Cter in SUMO2)). Lysine 188 is covalently cross-linked (Glycyl lysine isopeptide (Lys-Gly) (interchain with G-Cter in ubiquitin)).

Belongs to the universal ribosomal protein uL16 family. As to quaternary structure, component of the large ribosomal subunit. Mature ribosomes consist of a small (40S) and a large (60S) subunit. The 40S subunit contains about 33 different proteins and 1 molecule of RNA (18S). The 60S subunit contains about 49 different proteins and 3 molecules of RNA (28S, 5.8S and 5S). In terms of processing, citrullinated by PADI4. Ufmylated by UFL1.

It is found in the cytoplasm. In terms of biological role, component of the large ribosomal subunit. Plays a role in the formation of actively translating ribosomes. May play a role in the embryonic brain development. The chain is Large ribosomal subunit protein uL16 (RPL10) from Oryctolagus cuniculus (Rabbit).